Reading from the N-terminus, the 177-residue chain is Protein SPMIP1 (177 aa).

Residues 47 to 80 (SRLPRKLPTLLPQASVAPPPPASKTTPSKAPSPA) form a disordered region.

The chain is Protein SPMIP1 (Spmip1) from Mus musculus (Mouse).